The chain runs to 951 residues: Protocadherin-20 (951 aa).

Positions 1-60 (MRGRGNARSSQALGVSWCPATWHPRLDMGRLHRPRSSTSYRNLPHLFLFFLFVGPFSCLG) are cleaved as a signal peptide. Residues 61–890 (SYSRATELLY…VESVSCMPTL (830 aa)) are Extracellular-facing. Cadherin domains are found at residues 64 to 209 (RATE…APQF), 210 to 320 (PVSQ…CPLF), 321 to 535 (TDSQ…APIF), 536 to 639 (LQPL…SPRF), 640 to 742 (INKD…PPLV), and 746 to 863 (QSNM…EPEI). A glycan (N-linked (GlcNAc...) asparagine) is linked at Asn135. N-linked (GlcNAc...) asparagine glycosylation is found at Asn326 and Asn332. N-linked (GlcNAc...) asparagine glycosylation is found at Asn680, Asn748, Asn803, Asn844, and Asn849. Residues 891–911 (VALSVISLGSITLVTGMGIYI) form a helical membrane-spanning segment. The Cytoplasmic segment spans residues 912–951 (CLRKGEKHPREDENLEVQIPLKGKIDLHMRERKPMDISNI).

The protein resides in the cell membrane. Potential calcium-dependent cell-adhesion protein. This Homo sapiens (Human) protein is Protocadherin-20 (PCDH20).